A 177-amino-acid chain; its full sequence is Ribosome rescue factor SmrB (177 aa).

In terms of domain architecture, Smr spans 98–173; that stretch reads LDMHGMKQDE…GAGAILVLLS (76 aa).

This sequence belongs to the SmrB family. In terms of assembly, associates with collided ribosomes, but not with correctly translating polysomes.

In terms of biological role, acts as a ribosome collision sensor. Detects stalled/collided disomes (pairs of ribosomes where the leading ribosome is stalled and a second ribosome has collided with it) and endonucleolytically cleaves mRNA at the 5' boundary of the stalled ribosome. Stalled/collided disomes form a new interface (primarily via the 30S subunits) that binds SmrB. Cleaved mRNA becomes available for tmRNA ligation, leading to ribosomal subunit dissociation and rescue of stalled ribosomes. The sequence is that of Ribosome rescue factor SmrB from Aliivibrio fischeri (strain ATCC 700601 / ES114) (Vibrio fischeri).